Reading from the N-terminus, the 141-residue chain is Hemoglobin subunit alpha (141 aa).

The Globin domain occupies Val1–Arg141. Residue Ser3 is modified to Phosphoserine. N6-succinyllysine occurs at positions 7 and 11. The residue at position 16 (Lys16) is an N6-acetyllysine; alternate. Lys16 is modified (N6-succinyllysine; alternate). Tyr24 bears the Phosphotyrosine mark. Lys40 carries the N6-succinyllysine modification. Ser49 is modified (phosphoserine). His58 serves as a coordination point for O2. His87 contacts heme b. Position 102 is a phosphoserine (Ser102). Thr108 is modified (phosphothreonine). At Ser124 the chain carries Phosphoserine. A phosphothreonine mark is found at Thr134 and Thr137. Position 138 is a phosphoserine (Ser138).

This sequence belongs to the globin family. In terms of assembly, heterotetramer of two alpha chains and two beta chains. In terms of tissue distribution, red blood cells.

Involved in oxygen transport from the lung to the various peripheral tissues. Its function is as follows. Hemopressin acts as an antagonist peptide of the cannabinoid receptor CNR1. Hemopressin-binding efficiently blocks cannabinoid receptor CNR1 and subsequent signaling. The chain is Hemoglobin subunit alpha (HBA) from Lama vicugna (Vicugna).